Consider the following 548-residue polypeptide: SH2/SH3 adapter protein dreadlocks (548 aa).

Disordered stretches follow at residues 12–37 (IPDS…QHQN), 57–92 (QVPV…TASS), and 113–146 (GSGS…MKHG). Residues 20 to 37 (QQYPQQQQHPPQLPQHQN) show a composition bias toward low complexity. The span at 113–122 (GSGSANGSGS) shows a compositional bias: gly residues. A compositionally biased stretch (low complexity) spans 123 to 135 (GNSSSGSAAGNAG). In terms of domain architecture, SH3 1 spans 150-209 (DDVCYVVAKYDYAAQGAQELDLRKNERYLLLDDSKHWWRVQNSRNQSGYVPSNYVKKEKP). Residues 219–247 (VKKGSGSKTLPNCSPSRQVESPTMSRRLP) form a disordered region. Polar residues predominate over residues 227 to 242 (TLPNCSPSRQVESPTM). SH3 domains follow at residues 252-311 (EAIG…EDCD) and 324-386 (NVLD…ELND). A disordered region spans residues 398-442 (SAGNGNGGGSNGGAGGGGGNDSMERRNEGNKPAAQSSGQPIERPN). Over residues 401 to 417 (NGNGGGSNGGAGGGGGN) the composition is skewed to gly residues. An SH2 domain is found at 448-542 (WYYGAITRSQ…GEKLYLVRSL (95 aa)).

Interacts (via SH2 and SH3 domains) with Dscam1 (via cytoplasmic domain); the interaction is direct and requires Dscam1 to be phosphorylated. Interacts (via SH2 and SH3 domains) with InR/Insulin-like receptor (via C-terminal cytoplasmic region); the interaction requires InR kinase activity, probably for autophosphorylation stimulated by insulin signaling. Interacts with Ptp61F (via C-terminus); this interaction is independent of insulin stimulation. Interacts (via SH3 domain 2) with Pak (via N-terminal PXXP motif). In terms of processing, phosphorylated by Src42A and possibly by other tyrosine kinases. Constitutively dephosphorylated by its binding partner Ptp61F.

It is found in the perikaryon. It localises to the cell projection. Its subcellular location is the axon. The protein localises to the growth cone. Functionally, adapter protein that links cell surface receptor tyrosine phosphorylation to downstream signaling pathways and effectors, many of which are involved in regulation of the actin cytoskeleton. Recruited by Dscam1/Down syndrome cell adhesion molecule homolog and InR/insulin-like receptor. Recruits Pak to membranes, probably when dock/dreadlocks is associated with activated receptors. Required for guidance and targeting of photoreceptor (R cell) axon projections but not for axon outgrowth, differentiation or target induction in the developing eye. As part of a signaling pathway that involves the lbm/late bloomer protein, involved in synapse formation of the RP3 motorneuron at the muscle 7/6 cleft, probably by stimulating axon defasciculation from other SNb neurons. The protein is SH2/SH3 adapter protein dreadlocks of Drosophila melanogaster (Fruit fly).